The chain runs to 136 residues: Large-conductance mechanosensitive channel (136 aa).

2 helical membrane-spanning segments follow: residues 10 to 30 and 76 to 96; these read FAMR…AAFG and GVFI…FMAI.

Belongs to the MscL family. In terms of assembly, homopentamer.

Its subcellular location is the cell inner membrane. Channel that opens in response to stretch forces in the membrane lipid bilayer. May participate in the regulation of osmotic pressure changes within the cell. This is Large-conductance mechanosensitive channel from Escherichia coli O139:H28 (strain E24377A / ETEC).